The chain runs to 650 residues: Protein ANTI-SILENCING 1 (650 aa).

One can recognise a BAH domain in the interval 38-169; that stretch reads DEYRLYDCVL…VGSCKVVDTI (132 aa). Disordered stretches follow at residues 202–223, 229–248, 257–359, and 425–448; these read NGKS…GSVR, AFES…EKEK, KSTL…QKLD, and VTEK…ADDN. Composition is skewed to basic and acidic residues over residues 259-270 and 277-287; these read TLAEERSNKDSG and NGKDQESEVKK. Positions 302-315 are enriched in polar residues; the sequence is SNSFEASGSRTIHS. 2 stretches are compositionally biased toward basic and acidic residues: residues 348–358 and 438–448; these read LDDRPLKKQKL and RAEDKMSADDN. The region spanning 486-569 is the RRM domain; it reads TVVLLQNLDP…RPLVASFAKI (84 aa).

Component of the ASI1-AIPP1-EDM2 (AAE) RNA regulatory complex composed of at least AIPP1/EDM3, ASI1 and EDM2 and may contain CPL2, AIPP2 and AIPP3/BDT1. Binds directly to AIPP1/EDM3 and AIPP2.

Functionally, collaboratively with AIPP1/EDM3 and EDM2, the AAE complex regulates alternative RNA processing (e.g. alternative splicing) and epigenetic silencing (e.g. H3K9me2) of intronic heterochromatin-containing genes as well as genic heterochromatin-containing genes by promoting distal 3' polyadenylation; may associate with intronic heterochromatin and bind gene transcripts to modulate polyadenylation. Required to prevent promoter DNA hypermethylation and transcriptional silencing of some transgenes. Plays a similar role to that of the histone H3K9 demethylase JMJ25/IBM1 in preventing CHG methylation in the bodies of numerous genes. RNA-binding protein that ensures the proper expression of JMJ25/IBM1 full-length transcript by associating with an intronic heterochromatic repeat element of JMJ25/IBM1. Also modulates transposable elements (TE) expression. Contributes to a unique mechanism to deal with the collateral effect of silencing intronic repeat elements. This chain is Protein ANTI-SILENCING 1, found in Arabidopsis thaliana (Mouse-ear cress).